Here is a 370-residue protein sequence, read N- to C-terminus: MSLHQFLLEPITCHAWNRDRTQIALSPNNHEVHIYKKNGSQWTKAHELKEHNGHITGIDWAPKSDRIVTCGADRNAYVWSQKDGIWKPTLVILRINRAATFVKWSPLENKFAVGSGARLISVCYFESENDWWVSKHIKKPIRSTVLSLDWHPNNVLLAAGSCDFKCRVFSAYIKEVDEKPASTPWGSKMPFGQLMSEFGGSGTGGWVHGVSFSASGSRLAWVSHDSTVSVADASKSVQVSTLRTEFLPLLSVSFVSENSVVAAGHDCCPMLFNYDDRGCLTFVSKLDVPKQSIQRNMSAMERFRNMDKRATTEDRNTALETLHQNSITQVSIYEVDKQDCRKFCTTGIDGAMTIWDFKTLESSIQGLRIM.

WD repeat units lie at residues 6 to 45 (FLLE…WTKA), 50 to 89 (EHNG…WKPT), 140 to 179 (PIRS…VDEK), 202 to 241 (GTGG…QVST), 244 to 284 (TEFL…TFVS), and 322 to 365 (LHQN…SSIQ).

This sequence belongs to the WD repeat ARPC1 family. As to quaternary structure, probable component of the Arp2/3 complex in which it may replace ARPC1B.

It is found in the cytoplasm. The protein localises to the cytoskeleton. Its subcellular location is the nucleus. In terms of biological role, probably functions as a component of the Arp2/3 complex which is involved in regulation of actin polymerization and together with an activating nucleation-promoting factor (NPF) mediates the formation of branched actin networks. In addition to its role in the cytoplasmic cytoskeleton, the Arp2/3 complex also promotes actin polymerization in the nucleus, thereby regulating gene transcription and repair of damaged DNA. The chain is Actin-related protein 2/3 complex subunit 1A (Arpc1a) from Rattus norvegicus (Rat).